A 930-amino-acid chain; its full sequence is Xanthan lyase (930 aa).

The signal sequence occupies residues 1-25 (MLSGILIAALLMTLWGGWQPDIAHA). Xanthan-binding positions include 146-148 (NWW), His246, Tyr255, Arg309, 313-315 (RSY), and Asn424. Residue Tyr255 is the Proton donor/acceptor of the active site. Ca(2+) contacts are provided by Asp515, Asp516, and Glu517. Arg612 contributes to the xanthan binding site. A Ca(2+)-binding site is contributed by Glu676.

The protein belongs to the polysaccharide lyase 8 family. Monomer.

Its subcellular location is the secreted. It carries out the reaction Eliminative cleavage of the terminal beta-D-mannosyl-(1-&gt;4)-beta-D-glucuronosyl linkage of the side-chain of the polysaccharide xanthan, leaving a 4-deoxy-alpha-L-threo-hex-4-enuronosyl group at the terminus of the side-chain.. Activated by Co(2+) at 1 mM. Completely inhibited by Hg(2+) but not affected by other divalent cations. Intensely inhibited by NaCl and KCl at 150 mM, in particular by the Na(+) and K(+) ions but not the Cl(-) ions. Partially inhibited by iodoacetamide and N-ethylmaleimide at 1 mM but not by dithiothreitol, reduced glutathione or 2-mercaptoethanol. In terms of biological role, plays a role in xanthan depolymerization pathway by cleaving the linkage between the terminal mannosyl and glucuronyl residues of the side chain of xanthan to liberate pyruvylated mannose. Is highly specific for pyruvylated side-chains of xanthan and is not effective with hyaluronate, chondroitin A, gellan, heparin or pectin. The polypeptide is Xanthan lyase (Bacillus sp. (strain GL1)).